Reading from the N-terminus, the 486-residue chain is Probable glycine dehydrogenase (decarboxylating) subunit 2 (486 aa).

A disordered region spans residues 1-26 (MLIFESSRPGRQARAQAPKPTAATND). Lysine 264 is modified (N6-(pyridoxal phosphate)lysine).

The protein belongs to the GcvP family. C-terminal subunit subfamily. As to quaternary structure, the glycine cleavage system is composed of four proteins: P, T, L and H. In this organism, the P 'protein' is a heterodimer of two subunits. Pyridoxal 5'-phosphate serves as cofactor.

It catalyses the reaction N(6)-[(R)-lipoyl]-L-lysyl-[glycine-cleavage complex H protein] + glycine + H(+) = N(6)-[(R)-S(8)-aminomethyldihydrolipoyl]-L-lysyl-[glycine-cleavage complex H protein] + CO2. Its function is as follows. The glycine cleavage system catalyzes the degradation of glycine. The P protein binds the alpha-amino group of glycine through its pyridoxal phosphate cofactor; CO(2) is released and the remaining methylamine moiety is then transferred to the lipoamide cofactor of the H protein. This chain is Probable glycine dehydrogenase (decarboxylating) subunit 2, found in Nitrosococcus oceani (strain ATCC 19707 / BCRC 17464 / JCM 30415 / NCIMB 11848 / C-107).